The chain runs to 169 residues: Large ribosomal subunit protein uL10 (169 aa).

It belongs to the universal ribosomal protein uL10 family. In terms of assembly, part of the ribosomal stalk of the 50S ribosomal subunit. The N-terminus interacts with L11 and the large rRNA to form the base of the stalk. The C-terminus forms an elongated spine to which L12 dimers bind in a sequential fashion forming a multimeric L10(L12)X complex.

Functionally, forms part of the ribosomal stalk, playing a central role in the interaction of the ribosome with GTP-bound translation factors. This chain is Large ribosomal subunit protein uL10, found in Rickettsia typhi (strain ATCC VR-144 / Wilmington).